Consider the following 110-residue polypeptide: Small ribosomal subunit protein bS16 (110 aa).

The tract at residues 84 to 110 (KREARNNPEKAVPRKERKAAAEAAAKK) is disordered.

It belongs to the bacterial ribosomal protein bS16 family.

The sequence is that of Small ribosomal subunit protein bS16 from Rhodopseudomonas palustris (strain BisB18).